The sequence spans 561 residues: DNA ligase B (561 aa).

The active-site N6-AMP-lysine intermediate is lysine 128.

Belongs to the NAD-dependent DNA ligase family. LigB subfamily.

The catalysed reaction is NAD(+) + (deoxyribonucleotide)n-3'-hydroxyl + 5'-phospho-(deoxyribonucleotide)m = (deoxyribonucleotide)n+m + AMP + beta-nicotinamide D-nucleotide.. Its function is as follows. Catalyzes the formation of phosphodiester linkages between 5'-phosphoryl and 3'-hydroxyl groups in double-stranded DNA using NAD as a coenzyme and as the energy source for the reaction. This chain is DNA ligase B, found in Pseudomonas syringae pv. syringae (strain B728a).